A 437-amino-acid polypeptide reads, in one-letter code: UDP-N-acetylmuramate--L-alanine ligase (437 aa).

108 to 114 (GAHGKTS) contacts ATP.

It belongs to the MurCDEF family.

It localises to the cytoplasm. It catalyses the reaction UDP-N-acetyl-alpha-D-muramate + L-alanine + ATP = UDP-N-acetyl-alpha-D-muramoyl-L-alanine + ADP + phosphate + H(+). The protein operates within cell wall biogenesis; peptidoglycan biosynthesis. In terms of biological role, cell wall formation. This is UDP-N-acetylmuramate--L-alanine ligase from Staphylococcus haemolyticus (strain JCSC1435).